Here is a 157-residue protein sequence, read N- to C-terminus: Cyclic pyranopterin monophosphate synthase (157 aa).

Substrate is bound by residues 74-76 (MCH) and 112-113 (ME). The active site involves aspartate 127.

This sequence belongs to the MoaC family. In terms of assembly, homohexamer; trimer of dimers.

It catalyses the reaction (8S)-3',8-cyclo-7,8-dihydroguanosine 5'-triphosphate = cyclic pyranopterin phosphate + diphosphate. The protein operates within cofactor biosynthesis; molybdopterin biosynthesis. Functionally, catalyzes the conversion of (8S)-3',8-cyclo-7,8-dihydroguanosine 5'-triphosphate to cyclic pyranopterin monophosphate (cPMP). The protein is Cyclic pyranopterin monophosphate synthase of Campylobacter jejuni subsp. jejuni serotype O:6 (strain 81116 / NCTC 11828).